The sequence spans 340 residues: Homeobox protein DBX2 (340 aa).

The segment at residues 185-244 is a DNA-binding region (homeobox); the sequence is GILRRAVFSEDQRKALEKMFQKQKYISKTDRKKLAINLGLKESQVKIWFQNRRMKWRNSK. The segment at 283-313 is disordered; that stretch reads QQHPSPGWRENSPEPSERLIQGSPGAEALPP.

It belongs to the H2.0 homeobox family.

Its subcellular location is the nucleus. The polypeptide is Homeobox protein DBX2 (DBX2) (Bos taurus (Bovine)).